A 396-amino-acid chain; its full sequence is Probable tRNA sulfurtransferase (396 aa).

The 104-residue stretch at Ala-63–Ile-166 folds into the THUMP domain. Residues Leu-184–Tyr-185, Arg-266, Gly-288, and Gln-297 each bind ATP.

The protein belongs to the ThiI family.

Its subcellular location is the cytoplasm. It carries out the reaction [ThiI sulfur-carrier protein]-S-sulfanyl-L-cysteine + a uridine in tRNA + 2 reduced [2Fe-2S]-[ferredoxin] + ATP + H(+) = [ThiI sulfur-carrier protein]-L-cysteine + a 4-thiouridine in tRNA + 2 oxidized [2Fe-2S]-[ferredoxin] + AMP + diphosphate. It catalyses the reaction [ThiS sulfur-carrier protein]-C-terminal Gly-Gly-AMP + S-sulfanyl-L-cysteinyl-[cysteine desulfurase] + AH2 = [ThiS sulfur-carrier protein]-C-terminal-Gly-aminoethanethioate + L-cysteinyl-[cysteine desulfurase] + A + AMP + 2 H(+). It functions in the pathway cofactor biosynthesis; thiamine diphosphate biosynthesis. Its function is as follows. Catalyzes the ATP-dependent transfer of a sulfur to tRNA to produce 4-thiouridine in position 8 of tRNAs, which functions as a near-UV photosensor. Also catalyzes the transfer of sulfur to the sulfur carrier protein ThiS, forming ThiS-thiocarboxylate. This is a step in the synthesis of thiazole, in the thiamine biosynthesis pathway. The sulfur is donated as persulfide by IscS. This Aeropyrum pernix (strain ATCC 700893 / DSM 11879 / JCM 9820 / NBRC 100138 / K1) protein is Probable tRNA sulfurtransferase.